Consider the following 669-residue polypeptide: Small ribosomal subunit protein mS39 (669 aa).

A mitochondrion-targeting transit peptide spans 1–13 (MAAPCVRLGSVRC). 11 PPR repeats span residues 129–163 (IEGV…GTAP), 164–199 (SLET…DDQD), 209–239 (RPGQ…MPER), 240–274 (NAHS…RLTA), 275–314 (DVQT…NVRP), 315–351 (NLLT…NIEP), 352–392 (SLGT…FTLR), 396–430 (DVYF…DNRG), 438–472 (QSTY…LYYP), 473–507 (NSRG…GHSN), and 556–590 (SSAS…HRVP). Residues 186 to 218 (DIQTSEQNQQDDQDQQETEDSKKRPGQYRKASE) form a disordered region. Acidic residues predominate over residues 194 to 203 (QQDDQDQQET). A disordered region spans residues 648–669 (EDLQKSHSSSSSSSESSDSDRE). Over residues 653-663 (SHSSSSSSSES) the composition is skewed to low complexity.

Belongs to the mitochondrion-specific ribosomal protein mS39 family.

It localises to the mitochondrion. Its function is as follows. Mitochondrial protein that may have a role in mitochondrial translation. The chain is Small ribosomal subunit protein mS39 (ptcd3) from Xenopus laevis (African clawed frog).